The chain runs to 285 residues: MEMVLQRTSHHPVPGEQQEAAAELSSAELRRGPWTVDEDLTLINYISDHGEGRWNALARAAGLKRTGKSCRLRWLNYLRPDVKRGNFTAEEQLLILDLHSRWGNRWSKIAQHLPGRTDNEIKNYWRTRVQKHAKQLNCDVNSKRFKDAMKYLWMPRLAERIHARAGAVDDSGDYSNNDLSCVSGVTMATVANCFDGSPSMVTSSSSDSFTSESQDLKKINLHVHGDDEKMNSEDWMQEVDHEFWSTEIQPNNEQFQDQQLNGWVQGFSEGLSETLWSLEDIWKMQ.

HTH myb-type domains are found at residues 26-78 (SAEL…LNYL) and 79-133 (RPDV…QKHA). 2 consecutive DNA-binding regions (H-T-H motif) follow at residues 54–78 (WNAL…LNYL) and 106–129 (WSKI…RTRV).

It localises to the nucleus. Functionally, probable transcription factor that may be involved in the jasmonate-dependent defense responses to the rice blast fungus Magnaporthe oryzae. Does not seem to function in the salicylic acid-dependent signaling pathway. This Oryza sativa subsp. japonica (Rice) protein is Transcription factor JAMYB.